A 443-amino-acid chain; its full sequence is Nitrate/nitrite binding protein NrtA (443 aa).

The first 25 residues, 1-25 (MSQFSRRKFLLTAGGTAAAALWLNA), serve as a signal peptide directing secretion. A lipid anchor (N-palmitoyl cysteine) is attached at C26. Residue C26 is the site of S-diacylglycerol cysteine attachment. The segment covering 31–46 (SSTDTTGSTSTPAPSG) has biased composition (low complexity). The tract at residues 31-52 (SSTDTTGSTSTPAPSGTSGGDA) is disordered. W96, Q150, H195, G239, and K268 together coordinate nitrate.

Belongs to the CmpA/NrtA family. In terms of assembly, the complex is composed of two ATP-binding proteins (NrtC and NrtD), two transmembrane proteins (NrtB) and a solute-binding protein (NrtA). NrtA can form homotrimers. Post-translationally, the N-terminus is blocked.

The protein localises to the cell inner membrane. Its function is as follows. Part of the ABC transporter complex NrtABCD involved in nitrate uptake. The complex is probably also involved in nitrite transport. NrtA is the substrate-binding protein. Binds both nitrate and nitrite with high affinity. This chain is Nitrate/nitrite binding protein NrtA, found in Synechococcus elongatus (strain ATCC 33912 / PCC 7942 / FACHB-805) (Anacystis nidulans R2).